A 124-amino-acid chain; its full sequence is Small ribosomal subunit protein uS11 (124 aa).

The interval 102–124 (RIGRIEDATPIPHDGTTPKRKNR) is disordered.

The protein belongs to the universal ribosomal protein uS11 family. In terms of assembly, part of the 30S ribosomal subunit.

Located on the platform of the 30S subunit. The sequence is that of Small ribosomal subunit protein uS11 from Methanococcus maripaludis (strain C5 / ATCC BAA-1333).